Here is a 509-residue protein sequence, read N- to C-terminus: Maturase K (509 aa).

Belongs to the intron maturase 2 family. MatK subfamily.

It is found in the plastid. The protein resides in the chloroplast. In terms of biological role, usually encoded in the trnK tRNA gene intron. Probably assists in splicing its own and other chloroplast group II introns. The protein is Maturase K of Nicotiana plumbaginifolia (Leadwort-leaved tobacco).